The sequence spans 884 residues: Protein translocase subunit SecA (884 aa).

ATP is bound by residues Gln82, 100–104 (GEGKT), and Asp491.

This sequence belongs to the SecA family.

The protein resides in the plastid. The protein localises to the chloroplast stroma. It localises to the chloroplast thylakoid membrane. The catalysed reaction is ATP + H2O + cellular proteinSide 1 = ADP + phosphate + cellular proteinSide 2.. In terms of biological role, has a central role in coupling the hydrolysis of ATP to the transfer of proteins across the thylakoid membrane. This Olisthodiscus luteus (Marine phytoflagellate) protein is Protein translocase subunit SecA.